Reading from the N-terminus, the 448-residue chain is Ribosomal protein uS12 methylthiotransferase RimO (448 aa).

One can recognise an MTTase N-terminal domain in the interval 16-126; sequence PKISFVSLGC…VVAAVHEAVP (111 aa). [4Fe-4S] cluster contacts are provided by C25, C61, C90, C157, C161, and C164. Residues 143 to 380 enclose the Radical SAM core domain; that stretch reads LTPRHYAYLK…METQNGIALR (238 aa). The TRAM domain maps to 383-448; that stretch reads RAKVGKRLPV…EAYDLYGSVA (66 aa).

The protein belongs to the methylthiotransferase family. RimO subfamily. It depends on [4Fe-4S] cluster as a cofactor.

Its subcellular location is the cytoplasm. The catalysed reaction is L-aspartate(89)-[ribosomal protein uS12]-hydrogen + (sulfur carrier)-SH + AH2 + 2 S-adenosyl-L-methionine = 3-methylsulfanyl-L-aspartate(89)-[ribosomal protein uS12]-hydrogen + (sulfur carrier)-H + 5'-deoxyadenosine + L-methionine + A + S-adenosyl-L-homocysteine + 2 H(+). Catalyzes the methylthiolation of an aspartic acid residue of ribosomal protein uS12. The sequence is that of Ribosomal protein uS12 methylthiotransferase RimO from Methylobacterium radiotolerans (strain ATCC 27329 / DSM 1819 / JCM 2831 / NBRC 15690 / NCIMB 10815 / 0-1).